The sequence spans 214 residues: Small ribosomal subunit protein uS2 (214 aa).

Belongs to the universal ribosomal protein uS2 family.

This is Small ribosomal subunit protein uS2 from Methanococcoides burtonii (strain DSM 6242 / NBRC 107633 / OCM 468 / ACE-M).